Reading from the N-terminus, the 432-residue chain is Glyceraldehyde-3-phosphate dehydrogenase, testis-specific (432 aa).

Positions 1–97 (MSRRDVVLTN…PPPPPPPKPA (97 aa)) are testis-specific N-terminal extension. A disordered region spans residues 40–101 (PPPPKVEEPP…PPPKPAKELT (62 aa)). Over residues 44-55 (KVEEPPPPKEEP) the composition is skewed to basic and acidic residues. 2 stretches are compositionally biased toward pro residues: residues 56-67 (PPPPPPPPPPQI) and 75-95 (APPP…PPPK). NAD(+)-binding positions include 109–110 (RI), Asp-130, Lys-175, Tyr-197, and Thr-217. Residues 247-249 (SCT), Thr-278, 307-308 (TG), and Arg-330 each bind D-glyceraldehyde 3-phosphate. Residue Cys-248 is the Nucleophile of the active site. Phosphoserine is present on Ser-350. Asn-412 is a binding site for NAD(+).

It belongs to the glyceraldehyde-3-phosphate dehydrogenase family. In terms of assembly, homotetramer. As to expression, expressed in both head and flagellum of epididymal sperm.

It is found in the cytoplasm. The catalysed reaction is D-glyceraldehyde 3-phosphate + phosphate + NAD(+) = (2R)-3-phospho-glyceroyl phosphate + NADH + H(+). The protein operates within carbohydrate degradation; glycolysis; pyruvate from D-glyceraldehyde 3-phosphate: step 1/5. In terms of biological role, may play an important role in regulating the switch between different pathways for energy production during spermiogenesis and in the spermatozoon. Required for sperm motility and male fertility. The sequence is that of Glyceraldehyde-3-phosphate dehydrogenase, testis-specific (Gapdhs) from Rattus norvegicus (Rat).